A 223-amino-acid polypeptide reads, in one-letter code: Kinetochore protein Spc25 (223 aa).

The stretch at 51–116 forms a coiled coil; the sequence is RHQRKVGKLQ…QRKNEIMERI (66 aa).

This sequence belongs to the SPC25 family. Component of the Ndc80 complex, which is composed of Ndc80, Nuf2 and Spc25.

It is found in the nucleus. The protein localises to the chromosome. The protein resides in the centromere. Its subcellular location is the kinetochore. Functionally, acts as a component of the essential kinetochore-associated Ndc80 complex, which is required for chromosome segregation and spindle checkpoint activity during meiosis and mitosis. Required for kinetochore integrity and the organization of stable microtubule binding sites in the outer plate of the kinetochore. Participates in SAC signaling that responds specifically to disruptions in spindle microtubule dynamics. The NDC80 complex synergistically enhances the affinity of the SKA1 complex for microtubules and may allow the NDC80 complex to track depolymerizing microtubules. This chain is Kinetochore protein Spc25, found in Drosophila yakuba (Fruit fly).